The following is a 219-amino-acid chain: Large ribosomal subunit protein bL25 (219 aa).

Residues 176 to 219 (VTVVPPTDEPSEEEVEAMEGESATEEPEVVGEDKEDDEEENKED) are disordered. A compositionally biased stretch (acidic residues) spans 184–219 (EPSEEEVEAMEGESATEEPEVVGEDKEDDEEENKED).

It belongs to the bacterial ribosomal protein bL25 family. CTC subfamily. As to quaternary structure, part of the 50S ribosomal subunit; part of the 5S rRNA/L5/L18/L25 subcomplex. Contacts the 5S rRNA. Binds to the 5S rRNA independently of L5 and L18.

Its function is as follows. This is one of the proteins that binds to the 5S RNA in the ribosome where it forms part of the central protuberance. The sequence is that of Large ribosomal subunit protein bL25 from Staphylococcus epidermidis (strain ATCC 35984 / DSM 28319 / BCRC 17069 / CCUG 31568 / BM 3577 / RP62A).